The chain runs to 507 residues: Natural resistance-associated macrophage protein 1 (507 aa).

Positions 1–36 (MIRDKNPQRVNRPSYGSISSLPSPAPQPEPSRNTYL) are disordered. The Cytoplasmic portion of the chain corresponds to 1-39 (MIRDKNPQRVNRPSYGSISSLPSPAPQPEPSRNTYLSEK). Polar residues predominate over residues 8 to 22 (QRVNRPSYGSISSLP). Residues 40-60 (IPIPSTEQLLWVLLWATVLGL) traverse the membrane as a helical segment. At 61–123 (LCQRLAARLG…ISFNLLSAGR (63 aa)) the chain is on the extracellular side. Residues 124 to 144 (IPLWGGVLITIVDTFFFLFLD) form a helical membrane-spanning segment. Residues 145 to 152 (NYGLRKLE) lie on the Cytoplasmic side of the membrane. The chain crosses the membrane as a helical span at residues 153–173 (AFFGFLVTIMALTFGYEYVVA). Residues 174–199 (RPSQGALLKGLFLPSCPGCGQPELLQ) lie on the Extracellular side of the membrane. The helical transmembrane segment at 200 to 220 (AVGIVGAIIMPHNIYLHSALV) threads the bilayer. At 221–245 (KSREVDRTRRGDVREANMYFLTEAT) the chain is on the cytoplasmic side. A helical transmembrane segment spans residues 246 to 266 (IALFVSFIINLFVMAVFGQAF). At 267–305 (YQQTNEEAFNICANSSLHNYAKIFPRDNNTVSVDIYQGG) the chain is on the extracellular side. 2 N-linked (GlcNAc...) asparagine glycosylation sites follow: Asn280 and Asn294. A helical transmembrane segment spans residues 306-326 (VILGCLFGPAALYIWAVGLLA). Topologically, residues 327–353 (AGQSSTMTGTYAGQFVMEGFLKLRWSR) are cytoplasmic. Residues 354 to 374 (FARVLLTRSCAILPTVLVAVF) form a helical membrane-spanning segment. The Extracellular portion of the chain corresponds to 375–391 (RDLRDLSGLNDLLNVLQ). The helical transmembrane segment at 392–412 (SLLLPFAVLPILTFTSMPAVM) threads the bilayer. At 413–422 (QEFANGWLSK) the chain is on the cytoplasmic side. The helical transmembrane segment at 423 to 443 (VITSCIMALVCAINLYFVISY) threads the bilayer. The Extracellular portion of the chain corresponds to 444 to 451 (LPSLPHPA). The chain crosses the membrane as a helical span at residues 452 to 472 (YFGLVALLAIGYLGLTAYLAW). Residues 473-507 (TCCIAHGAKFLTHSSHQRFLYGLPIEEQEGREGSG) are Cytoplasmic-facing.

Belongs to the NRAMP family.

The protein localises to the late endosome membrane. It localises to the lysosome membrane. It catalyses the reaction Zn(2+)(in) + H(+)(out) = Zn(2+)(out) + H(+)(in). The catalysed reaction is Fe(2+)(in) + H(+)(out) = Fe(2+)(out) + H(+)(in). The enzyme catalyses Mn(2+)(in) + H(+)(out) = Mn(2+)(out) + H(+)(in). Its function is as follows. Macrophage-specific antiporter that fluxes metal ions in either direction against a proton gradient. Localized to late endosomal lysosomal membranes, delivers bivalent cations from the cytosol into these acidic compartments where they may directly affect antimicrobial activity. Involved in iron metabolism and host natural resistance to infection with intracellular parasites. Pathogen resistance involves sequestration of Fe(2+) and Mn(2+), cofactors of both prokaryotic and eukaryotic catalases and superoxide dismutases, not only to protect the macrophage against its own generation of reactive oxygen species, but to deny the cations to the pathogen for synthesis of its protective enzymes. The polypeptide is Natural resistance-associated macrophage protein 1 (Slc11a1) (Rattus norvegicus (Rat)).